A 911-amino-acid polypeptide reads, in one-letter code: Protein SOSEKI (911 aa).

Positions 15–107 (TKVQVVYYLS…LVLKGSELYT (93 aa)) are DIX-like oligomerization domain. Disordered regions lie at residues 219–470 (SETL…TQCE) and 492–810 (LCGN…PPRI). 2 stretches are compositionally biased toward basic and acidic residues: residues 253-286 (TDREHSYGPPRKTESMGRERSLPRDLPRSREVSR) and 295-407 (EAPR…EELP). Over residues 414 to 423 (SPTCSESGDS) the composition is skewed to polar residues. Over residues 452 to 467 (SSSTRSSTPSTSAAST) the composition is skewed to low complexity. An Association to cell membranes motif is present at residues 493 to 494 (CG). A compositionally biased stretch (low complexity) spans 511 to 527 (PLAAAAQPASGAVPQSP). A compositionally biased stretch (polar residues) spans 591-607 (SGVNSAMATPFLQTENN). The span at 608 to 662 (SPSSSESSSAAVSSGKKPASISLSGTSDASDGGNGASSTASSSSEVQNNVSVKEV) shows a compositional bias: low complexity. A compositionally biased stretch (polar residues) spans 663-683 (ITQQLPSPSSSEGRPSLNIDT). Positions 696–709 (SDVRETVKTTRPDS) are enriched in basic and acidic residues. Positions 722–733 (PVRTQLSSSPSF) are enriched in polar residues. Basic and acidic residues predominate over residues 735 to 771 (KRIEDARARARSLVSKEIRSGESRSSKDLLKENDRVK). Positions 772 to 784 (TSSGSMRSGSTRT) are enriched in low complexity. The segment covering 785–805 (PNNKNGTTGAGSKTLSGTFNR) has biased composition (polar residues). The C2HC/C3H-type zinc-finger motif lies at 864–893 (ILQECGQCGRTFKPDSLKVHMRGCHALRRS). Zn(2+) contacts are provided by Cys868, Cys871, His883, and Cys887.

Belongs to the SOSEKI family. Homodimer. Forms long polymer filaments with other SOKs proteins polymers crucial for polar localization and biological activity. It depends on Zn(2+) as a cofactor.

It is found in the cell membrane. SOSEKI proteins locally interpret global polarity cues and can influence cell division orientation to coordinate cell polarization relative to body axes. The chain is Protein SOSEKI from Marchantia polymorpha (Common liverwort).